Consider the following 903-residue polypeptide: Cell division cycle protein 48 homolog MJ1156 (903 aa).

ATP is bound by residues 220–227 and 493–500; these read GPPGTGKT.

This sequence belongs to the AAA ATPase family. CDC48 subfamily.

The sequence is that of Cell division cycle protein 48 homolog MJ1156 from Methanocaldococcus jannaschii (strain ATCC 43067 / DSM 2661 / JAL-1 / JCM 10045 / NBRC 100440) (Methanococcus jannaschii).